The following is a 112-amino-acid chain: Keratin-associated protein 12-4 (112 aa).

Tandem repeats lie at residues 10–14 (CPMAC), 20–24 (CVPST), 25–29 (CYPPE), 35–39 (CCCSA), 41–45 (CVALL), 46–50 (CRPLC), 56–60 (CQPAC), 61–65 (CVPSP), 66–70 (CQVAC), 71–75 (CVPVS), 76–80 (CKPVL), 81–85 (CVASF), 86–90 (CPTSG), 91–95 (CCQPF), and 96–100 (CPTLV). Residues 10–100 (CPMACPGSPC…CCQPFCPTLV (91 aa)) are 15 X 5 AA approximate repeats.

This sequence belongs to the KRTAP type 12 family. In terms of assembly, interacts with hair keratins. Restricted to a narrow region of the hair fiber cuticle, lying approximately 20 cell layers above the apex of the dermal papilla of the hair root; not detected in any other tissues.

In the hair cortex, hair keratin intermediate filaments are embedded in an interfilamentous matrix, consisting of hair keratin-associated proteins (KRTAP), which are essential for the formation of a rigid and resistant hair shaft through their extensive disulfide bond cross-linking with abundant cysteine residues of hair keratins. The matrix proteins include the high-sulfur and high-glycine-tyrosine keratins. This Homo sapiens (Human) protein is Keratin-associated protein 12-4 (KRTAP12-4).